Consider the following 211-residue polypeptide: Large ribosomal subunit protein uL3 (211 aa).

A disordered region spans residues 126 to 147 (HGQSRGPMAHGSRYHRRPGSMG).

It belongs to the universal ribosomal protein uL3 family. In terms of assembly, part of the 50S ribosomal subunit. Forms a cluster with proteins L14 and L19.

One of the primary rRNA binding proteins, it binds directly near the 3'-end of the 23S rRNA, where it nucleates assembly of the 50S subunit. In Geobacillus thermodenitrificans (strain NG80-2), this protein is Large ribosomal subunit protein uL3.